The chain runs to 166 residues: Urease accessory protein UreE (166 aa).

The segment at 135–156 (EQGAYGGGHHHSHHGDEEFNYG) is disordered.

Belongs to the UreE family.

It is found in the cytoplasm. Involved in urease metallocenter assembly. Binds nickel. Probably functions as a nickel donor during metallocenter assembly. The polypeptide is Urease accessory protein UreE (Ectopseudomonas mendocina (strain ymp) (Pseudomonas mendocina)).